A 475-amino-acid polypeptide reads, in one-letter code: Ankyrin repeat, SAM and basic leucine zipper domain-containing protein 1 (475 aa).

Residues 1-25 (MAAGTLRGLAVAGGGESSDSEDDGW) form a disordered region. Phosphoserine is present on residues Ser17, Ser18, and Ser20. ANK repeat units lie at residues 45-74 (EKNETFKKALTTGDISLVKELLDSGINVDS), 78-107 (YGWTPLMYAASVANAELVRFLLDRGANASF), 110-144 (DKLTILISACSARGSEEQVLKCVELLLSRNADPNT), 148-177 (RLMTPIMYAARDGHTQVVALLVAHGAEVNA), 181-210 (NGYTALTWAARQGHKNVILKLLELGANKML), and 214-243 (DGRTPSEIAKRNKHLEIFNFLSLTLNPLEG). The region spanning 272–334 (PYTAFGDLEI…KILAALKELE (63 aa)) is the SAM domain.

As to quaternary structure, interacts with DDX4, PIWIL1, RANBP9 and TDRD1. In terms of tissue distribution, expressed exclusively in testis and ovary with higher levels in testis.

It localises to the cytoplasm. Functionally, plays a central role during spermatogenesis by repressing transposable elements and preventing their mobilization, which is essential for the germline integrity. Acts via the piRNA metabolic process, which mediates the repression of transposable elements during meiosis by forming complexes composed of piRNAs and Piwi proteins and governs the methylation and subsequent repression of transposons. Its association with pi-bodies suggests a participation in the primary piRNAs metabolic process. Required prior to the pachytene stage to facilitate the production of multiple types of piRNAs, including those associated with repeats involved in regulation of retrotransposons. May act by mediating protein-protein interactions during germ cell maturation. The sequence is that of Ankyrin repeat, SAM and basic leucine zipper domain-containing protein 1 from Mus musculus (Mouse).